The sequence spans 245 residues: 5-oxoprolinase subunit A (245 aa).

It belongs to the LamB/PxpA family. In terms of assembly, forms a complex composed of PxpA, PxpB and PxpC.

The enzyme catalyses 5-oxo-L-proline + ATP + 2 H2O = L-glutamate + ADP + phosphate + H(+). In terms of biological role, catalyzes the cleavage of 5-oxoproline to form L-glutamate coupled to the hydrolysis of ATP to ADP and inorganic phosphate. In Cronobacter sakazakii (strain ATCC BAA-894) (Enterobacter sakazakii), this protein is 5-oxoprolinase subunit A.